The chain runs to 123 residues: uncharacterized protein (123 aa).

This is an uncharacterized protein from Escherichia coli O157:H7.